Consider the following 259-residue polypeptide: Factor V activator (259 aa).

The first 18 residues, 1 to 18 (MVLIRVLANLLVLQLSYA), serve as a signal peptide directing secretion. Residues 19–24 (QKSSEL) constitute a propeptide that is removed on maturation. Positions 25–251 (VVGGDECDIN…YTDWIQSIIA (227 aa)) constitute a Peptidase S1 domain. 6 disulfide bridges follow: C31–C165, C52–C68, C100–C258, C144–C212, C176–C191, and C202–C227. Catalysis depends on charge relay system residues H67 and D112. Catalysis depends on S206, which acts as the Charge relay system. N253 is a glycosylation site (N-linked (GlcNAc...) asparagine).

This sequence belongs to the peptidase S1 family. Snake venom subfamily. Monomer. Post-translationally, N-glycosylated. Contains 4.4% of hexoses, 4.4% of hexosamines and 3.1% of sialic acids. In terms of tissue distribution, expressed by the venom gland.

Its subcellular location is the secreted. The catalysed reaction is Fully activates human clotting factor V by a single cleavage at the 1545-Trp-Tyr-Leu-Arg-|-Ser-Asn-Asn-Gly-1552 bond. Cattle, but not rabbit, factor V is cleaved, and no other proteins of the clotting system are attacked. Esterase activity is observed on Bz-Arg-OEt and Tos-Arg-OMe, and amidase activity on Phe-pipecolyl-Arg-NHPhNO2.. Its activity is regulated as follows. Inhibited by D-Phe-Pro-Arg-chloromethyl ketone (FPRCK) (98%), PMSF (93%), benzamidine (67%), and diisopropylfluorophosphate (DFP). Is not inhibited by BPTI, antithrombin and EDTA. In terms of biological role, venom serine protease that converts factor V (F5) to the active form Va in the presence of calcium ions and phospholipids. It cleaves the Arg(1545)-Ser(1546) linkage in the human factor V molecule. Has hydrolytic activities against BAEE (1.2 U/mg), TAME, and Pro-Phe-Arg-MCA (4.9 U/mg). Shows coagulant activity. This is Factor V activator from Macrovipera lebetinus (Levantine viper).